A 328-amino-acid polypeptide reads, in one-letter code: Pleckstrin homology domain protein OPY1 (328 aa).

Residues 19–52 (NLIKKPSTSQNKTPTAQSSSGNNGAADGAPQGYH) are disordered. A compositionally biased stretch (polar residues) spans 24–41 (PSTSQNKTPTAQSSSGNN). Positions 213 to 328 (AEHQVCSGIL…IRKKLKAENI (116 aa)) are required for targeting to the cell membrane. Residues 215-318 (HQVCSGILYT…WIINFKSGIL (104 aa)) enclose the PH domain.

Interacts with MSS4 (via N-terminus); to negatively regulate MSS4 kinase activity.

It localises to the cell membrane. The protein localises to the cytoplasm. Binds phosphatidylinositol 4,5-bisphosphate (PtdIns(4,5)P2/PIP2) at the cell membrane. Negatively regulates the activity of phosphatidylinositol 4-phosphate 5-kinase MSS4. This is Pleckstrin homology domain protein OPY1 (OPY1) from Saccharomyces cerevisiae (strain ATCC 204508 / S288c) (Baker's yeast).